Consider the following 88-residue polypeptide: Large ribosomal subunit protein eL20 (88 aa).

This sequence belongs to the eukaryotic ribosomal protein eL20 family. In terms of assembly, part of the 50S ribosomal subunit. Binds 23S rRNA.

The chain is Large ribosomal subunit protein eL20 from Aeropyrum pernix (strain ATCC 700893 / DSM 11879 / JCM 9820 / NBRC 100138 / K1).